We begin with the raw amino-acid sequence, 908 residues long: Serine/threonine-protein kinase WARTS homolog (908 aa).

Residues 42–70 (EIRVGRHRAKLDEIRESLKAYEHEAGLLS) adopt a coiled-coil conformation. Low complexity-rich tracts occupy residues 115–125 (VSSAAVSNSNS) and 168–181 (PSTTISSTPSTTTE). Disordered regions lie at residues 115 to 134 (VSSAAVSNSNSFRTEGGGHK), 162 to 183 (MIRNGNPSTTISSTPSTTTEES), 203 to 225 (NNNAPQYSPGYSRPPPPAYDSSP), and 388 to 412 (KSRAQPPPPQYNQPSEPPPKRVSSP). The segment covering 392-404 (QPPPPQYNQPSEP) has biased composition (pro residues). Residues 439-470 (YMEQHVERLLQQYKEREKRMKQLEKEMVSAQL) adopt a coiled-coil conformation. The Protein kinase domain maps to 502 to 807 (FTVISHIGVG…TAQVKNHPWF (306 aa)). ATP-binding positions include 508–516 (IGVGAFGKV) and K531. The Proton acceptor role is filled by D625. The AGC-kinase C-terminal domain maps to 808-874 (RGIDWVNLRK…RHFFDTDSVG (67 aa)).

It belongs to the protein kinase superfamily. AGC Ser/Thr protein kinase family. In terms of assembly, interacts (via N-terminus) with yap-1 (via WW domain). Mg(2+) is required as a cofactor. Expressed in muscles and epithelial tissues including pharynx, intestine and hypodermis. Expressed in vulval and spermathecal seam cells.

The protein resides in the cytoplasm. Its subcellular location is the apical cell membrane. The enzyme catalyses L-seryl-[protein] + ATP = O-phospho-L-seryl-[protein] + ADP + H(+). It carries out the reaction L-threonyl-[protein] + ATP = O-phospho-L-threonyl-[protein] + ADP + H(+). In terms of biological role, phosphorylates yap-1 which may negatively regulate yap-1 nuclear localization. Plays an essential role in larval development. Regulates growth, the formation of gut granules, lifespan and cell and body sizes probably in synergy with the TGF-beta sma/mab pathway. Does not appear to regulate apoptosis and proliferation. In addition, may synergize with the TGF-beta daf-7 dauer pathway to regulate entry into the dauer stage. Maintains the cellular integrity of intestinal cells by regulating the localization of apical actin and junctional proteins. This chain is Serine/threonine-protein kinase WARTS homolog, found in Caenorhabditis elegans.